Consider the following 359-residue polypeptide: tRNA-specific 2-thiouridylase MnmA (359 aa).

Residues 7–14 and Met-33 contribute to the ATP site; that span reads AMSGGVDS. The active-site Nucleophile is the Cys-101. Cys-101 and Cys-198 are disulfide-bonded. An ATP-binding site is contributed by Gly-125. The interval 148–150 is interaction with tRNA; it reads KDQ. The active-site Cysteine persulfide intermediate is the Cys-198.

The protein belongs to the MnmA/TRMU family.

The protein localises to the cytoplasm. The enzyme catalyses S-sulfanyl-L-cysteinyl-[protein] + uridine(34) in tRNA + AH2 + ATP = 2-thiouridine(34) in tRNA + L-cysteinyl-[protein] + A + AMP + diphosphate + H(+). Functionally, catalyzes the 2-thiolation of uridine at the wobble position (U34) of tRNA, leading to the formation of s(2)U34. The protein is tRNA-specific 2-thiouridylase MnmA of Chloroflexus aggregans (strain MD-66 / DSM 9485).